The primary structure comprises 345 residues: D-fructose 1,6-bisphosphatase class 2/sedoheptulose 1,7-bisphosphatase (345 aa).

Mn(2+)-binding residues include D33, E57, D97, and E100. Residues 100 to 102 (EGT), Y131, 176 to 178 (RPR), and 198 to 200 (DGD) each bind substrate. Mn(2+) is bound at residue E225.

It belongs to the FBPase class 2 family. As to quaternary structure, homotetramer. Mn(2+) is required as a cofactor.

The catalysed reaction is beta-D-fructose 1,6-bisphosphate + H2O = beta-D-fructose 6-phosphate + phosphate. It catalyses the reaction D-sedoheptulose 1,7-bisphosphate + H2O = D-sedoheptulose 7-phosphate + phosphate. The protein operates within carbohydrate biosynthesis; Calvin cycle. Functionally, catalyzes the hydrolysis of fructose 1,6-bisphosphate (Fru 1,6-P2) and sedoheptulose 1,7-bisphosphate (Sed 1,7-P2) to fructose 6-phosphate and sedoheptulose 7-phosphate, respectively. In Microcystis aeruginosa (strain NIES-843 / IAM M-2473), this protein is D-fructose 1,6-bisphosphatase class 2/sedoheptulose 1,7-bisphosphatase.